Reading from the N-terminus, the 712-residue chain is Methylmalonyl-CoA mutase (712 aa).

Substrate contacts are provided by residues 73 to 77, 183 to 185, arginine 195, lysine 222, histidine 232, and 271 to 273; these read TVRQY, TIQ, and RLS. The 133-residue stretch at 580–712 folds into the B12-binding domain; the sequence is KPKIMVAKLG…DLIEGKRRNV (133 aa). Position 593 (histidine 593) interacts with adenosylcob(III)alamin.

The protein belongs to the methylmalonyl-CoA mutase family. In terms of assembly, homodimer. The cofactor is adenosylcob(III)alamin. It depends on a monovalent cation as a cofactor.

The catalysed reaction is (R)-methylmalonyl-CoA = succinyl-CoA. It functions in the pathway metabolic intermediate metabolism; propanoyl-CoA degradation; succinyl-CoA from propanoyl-CoA: step 3/3. In terms of biological role, radical enzyme that catalyzes the transformation of methylmalonyl-CoA to succinyl-CoA. Is required for growth on the polyhydroxyalkanoate degradation pathway intermediates 3-hydroxybutyrate and acetoacetate as sole carbon source. This is Methylmalonyl-CoA mutase from Rhizobium meliloti (strain 1021) (Ensifer meliloti).